Reading from the N-terminus, the 439-residue chain is Proline--tRNA ligase (439 aa).

Belongs to the class-II aminoacyl-tRNA synthetase family. ProS type 2 subfamily. In terms of assembly, homodimer.

The protein localises to the cytoplasm. It carries out the reaction tRNA(Pro) + L-proline + ATP = L-prolyl-tRNA(Pro) + AMP + diphosphate. Catalyzes the attachment of proline to tRNA(Pro) in a two-step reaction: proline is first activated by ATP to form Pro-AMP and then transferred to the acceptor end of tRNA(Pro). The chain is Proline--tRNA ligase from Bradyrhizobium diazoefficiens (strain JCM 10833 / BCRC 13528 / IAM 13628 / NBRC 14792 / USDA 110).